The chain runs to 171 residues: S-ribosylhomocysteine lyase (171 aa).

Fe cation-binding residues include His-54, His-58, and Cys-128.

Belongs to the LuxS family. In terms of assembly, homodimer. It depends on Fe cation as a cofactor.

It carries out the reaction S-(5-deoxy-D-ribos-5-yl)-L-homocysteine = (S)-4,5-dihydroxypentane-2,3-dione + L-homocysteine. Its function is as follows. Involved in the synthesis of autoinducer 2 (AI-2) which is secreted by bacteria and is used to communicate both the cell density and the metabolic potential of the environment. The regulation of gene expression in response to changes in cell density is called quorum sensing. Catalyzes the transformation of S-ribosylhomocysteine (RHC) to homocysteine (HC) and 4,5-dihydroxy-2,3-pentadione (DPD). This Pectobacterium atrosepticum (strain SCRI 1043 / ATCC BAA-672) (Erwinia carotovora subsp. atroseptica) protein is S-ribosylhomocysteine lyase.